A 218-amino-acid chain; its full sequence is Oxaloacetate decarboxylase, mitochondrial (218 aa).

Residues 1–18 (MNKFWETGRKIVAVGRNY) constitute a mitochondrion transit peptide. Residues glutamate 63, glutamate 65, and aspartate 94 each coordinate Mg(2+).

The protein belongs to the FAH family. As to quaternary structure, homodimer. Requires Mg(2+) as cofactor. The cofactor is Mn(2+).

The protein resides in the mitochondrion. Its subcellular location is the cytoplasm. The protein localises to the cytosol. It catalyses the reaction a 3-acylpyruvate + H2O = a carboxylate + pyruvate + H(+). The enzyme catalyses acetylpyruvate + H2O = acetate + pyruvate + H(+). The catalysed reaction is 3-fumarylpyruvate + H2O = fumarate + pyruvate + H(+). It carries out the reaction oxaloacetate + H(+) = pyruvate + CO2. In terms of biological role, mitochondrial protein that acts as an oxaloacetate decarboxylase (ODx), catalyzing the decarboxylation of oxaloacetate (OAA) to pyruvate and CO(2), and as such is likely a regulatory enzyme in the TCA cycle. Also displays acylpyruvase activity, being able to hydrolyze acetylpyruvate and fumarylpyruvate in vitro. The sequence is that of Oxaloacetate decarboxylase, mitochondrial (fahd1) from Dictyostelium discoideum (Social amoeba).